Reading from the N-terminus, the 1379-residue chain is MAQTLSFNGRRRVRKFFGKIPEVAEMPNLIEVQKASYDQFLMVDEPEGGRPDEGLQTVFKSVFPITDFSGASMLEFVSYEFEPPKFDVDECRQRDLTYAAPLKVTLRLIVFDIDEDTGARSIKDIKEQSVYMGDMPLMTNNGTFIVNGTERVIVSQMHRSPGVFFDHDKGKSHSSGKLLFAARVIPYRGSWLDIEFDAKDIVHARIDRRRKIPVTSLLMALGMDGEEILSTFYSKSDYKRDGKGWRVPFQAETLKGSKTLVDMVDADSGEVVVEAGKKLTPRLLRQLQDKGLKALKATDEDLYGNYLAEDIVNFATGEIYLEAGDEIDEKTLPIILDAGFEEIPVLGIDHINVGAYIRNTLAADKNENRQDALFDIYRVMRPGEPPTMDSAEAMFNSLFFDSERYDLSAVGRVKMNMRLDLEVADTVRVLRKEDILAVVKMLVELRDGKGEIDDIDNLGNRRVRSVGELMENQYRLGLLRMERAIKERMSSIEIDTVMPQDLINAKPAAAAVREFFGSSQLSQFMDQVNPLSEITHKRRLSALGPGGLTRERAGFEVRDVHPTHYGRICPIETPEGPNIGLINSLATFARVNKYGFIESPYRKIIDGVVTKDVIYLSAMEEAKYYVAQANAELNAEGKFVEEFVVCRHAGEVMLSPRDTINLMDVSPKQLVSVAAALIPFLENDDANRALMGSNMQRQAVPLLRAEAPFVGTGMEPIVARDSGAAIGARRGGVVDQVDATRIVIRATEDLDAGKSGVDIYRLQKFQRSNQNTCVNQRPLVAVGDILNKGDIIADGPSTDLGDLALGRNALVAFMPWNGYNYEDSILMSERIVSEDVFTSIHIEEFEVMARDTKLGPEEITRDIPNVSEEALRNLDEAGIVYIGAEVQPGDILVGKITPKGESPMTPEEKLLRAIFGEKASDVRDTSMRMPPGTFGTIVEVRVFNRHGVEKDERAMAIEREEIERLAKDRDDEQAILDRNVYGRLLDTLRGQVSIAGPKGFKKGVELNNAVISEYPRSQWWMFAVEDEKVQSELEALRGQYDESKSRLEQRFMDKVEKVQRGDEMPPGVMKMVKVFVAVKRKIQPGDKMAGRHGNKGVVSRIVPVEDMPFLEDGTHVDIVLNPLGVPSRMNVGQILETHLAWACAGMGRKIGQMLEDYQKHLDITELRTELVDLYASESHDEVARFDDESLLRLADQAKSGLSIATPVFDGAHESDVSEMLTRAGLHTSGQSVLYDGRTGETFDRKVTVGYMYMIKLNHLVDDKIHARSIGPYSLVTQQPLGGKAQFGGQRFGEMEVWALEAYGAAYTLQEMLTVKSDDVAGRTKVYEAIVRGDDTFEAGIPESFNVLVKEMRSLGLSVELENSKLETADTVNPLPDAAE.

Belongs to the RNA polymerase beta chain family. The RNAP catalytic core consists of 2 alpha, 1 beta, 1 beta' and 1 omega subunit. When a sigma factor is associated with the core the holoenzyme is formed, which can initiate transcription.

The catalysed reaction is RNA(n) + a ribonucleoside 5'-triphosphate = RNA(n+1) + diphosphate. In terms of biological role, DNA-dependent RNA polymerase catalyzes the transcription of DNA into RNA using the four ribonucleoside triphosphates as substrates. The chain is DNA-directed RNA polymerase subunit beta from Allorhizobium ampelinum (strain ATCC BAA-846 / DSM 112012 / S4) (Agrobacterium vitis (strain S4)).